Reading from the N-terminus, the 760-residue chain is Xaa-Pro dipeptidyl-peptidase (760 aa).

Catalysis depends on charge relay system residues Ser-349, Asp-469, and His-499.

This sequence belongs to the peptidase S15 family. Homodimer.

It localises to the cytoplasm. It catalyses the reaction Hydrolyzes Xaa-Pro-|- bonds to release unblocked, N-terminal dipeptides from substrates including Ala-Pro-|-p-nitroanilide and (sequentially) Tyr-Pro-|-Phe-Pro-|-Gly-Pro-|-Ile.. Its function is as follows. Removes N-terminal dipeptides sequentially from polypeptides having unsubstituted N-termini provided that the penultimate residue is proline. The sequence is that of Xaa-Pro dipeptidyl-peptidase from Streptococcus pyogenes serotype M3 (strain ATCC BAA-595 / MGAS315).